We begin with the raw amino-acid sequence, 2494 residues long: Nuclear receptor corepressor 1 (2494 aa).

A compositionally biased stretch (polar residues) spans methionine 1–arginine 33. Disordered stretches follow at residues methionine 1–phenylalanine 38, leucine 53–aspartate 106, serine 134–lysine 170, and glutamine 198–glutamine 222. A compositionally biased stretch (basic and acidic residues) spans proline 71–glycine 82. Over residues tyrosine 83–glutamine 92 the composition is skewed to polar residues. 3 stretches are compositionally biased toward basic and acidic residues: residues asparagine 93–aspartate 106, serine 134–threonine 148, and glutamate 204–lysine 213. The tract at residues serine 154–aspartate 304 is interaction with tbl1xr1. A coiled-coil region spans residues leucine 168–proline 208. An SANT 1 domain is found at glutamine 427–asparagine 478. Disordered stretches follow at residues proline 488 to glycine 638, asparagine 671 to lysine 913, arginine 981 to aspartate 1007, glycine 1081 to glycine 1124, isoleucine 1413 to arginine 1434, methionine 1488 to glutamate 1585, leucine 1745 to isoleucine 1845, and glutamate 1912 to lysine 1987. Basic and acidic residues-rich tracts occupy residues alanine 502–glutamate 525 and lysine 535–alanine 548. A coiled-coil region spans residues alanine 502–isoleucine 549. Residues alanine 582 to proline 616 show a composition bias toward low complexity. A compositionally biased stretch (pro residues) spans valine 617–threonine 629. The SANT 2 domain maps to glutamate 622–asparagine 668. Residues glutamine 692–alanine 702 show a composition bias toward polar residues. Positions serine 698–serine 726 form a coiled coil. Acidic residues predominate over residues glutamine 703–glycine 722. The segment covering alanine 723–alanine 741 has biased composition (low complexity). A compositionally biased stretch (polar residues) spans alanine 766–valine 779. Basic and acidic residues predominate over residues alanine 829–alanine 864. Composition is skewed to polar residues over residues glutamate 881–cysteine 892, methionine 993–proline 1004, and alanine 1104–glycine 1124. A compositionally biased stretch (basic and acidic residues) spans methionine 1488–arginine 1504. Residues threonine 1508–arginine 1519 show a composition bias toward polar residues. Positions proline 1548 to alanine 1561 are enriched in low complexity. Positions valine 1771–alanine 1810 form a coiled coil. Basic and acidic residues predominate over residues alanine 1773–leucine 1807. The span at proline 1835 to isoleucine 1845 shows a compositional bias: polar residues. Basic and acidic residues predominate over residues valine 1914–valine 1935. Residues glutamine 1953–proline 1972 show a composition bias toward low complexity. Positions alanine 1978–lysine 1987 are enriched in basic and acidic residues. The CORNR box 1 motif lies at isoleucine 2008–isoleucine 2012. The tract at residues serine 2018–histidine 2105 is disordered. Positions serine 2027–histidine 2036 are enriched in low complexity. Residues histidine 2039–isoleucine 2048 are compositionally biased toward basic and acidic residues. Positions arginine 2088–isoleucine 2102 are enriched in polar residues. Positions isoleucine 2119–isoleucine 2123 match the CORNR box 2 motif. Polar residues predominate over residues glutamine 2135–proline 2177. Residues glutamine 2135 to proline 2216 form a disordered region. Positions valine 2186–glutamate 2205 are enriched in basic and acidic residues. The CORNR box 3 motif lies at leucine 2322–isoleucine 2326. Disordered regions lie at residues glycine 2346 to serine 2413 and methionine 2446 to glutamate 2494. A compositionally biased stretch (basic residues) spans histidine 2376 to lysine 2390. Polar residues-rich tracts occupy residues methionine 2446–arginine 2472 and glutamine 2485–glutamate 2494.

This sequence belongs to the N-CoR nuclear receptor corepressors family. In terms of assembly, forms a large corepressor complex that contains sin3a/b, histone deacetylases hdac1 and hdac2, rbbp4 and possibly rbbp7. Interacts with the thyroid receptor (TR, composed of rxra and thrb) and the retinoid acid receptor (RAR, composed of rxra and rara) in the absence of ligand. Interacts with tbl1xr1. Interacts with zbtb33/kaiso.

The protein localises to the nucleus. Mediates transcriptional repression by certain nuclear receptors. Participates in complexes which promote histone deacetylation and the formation of repressive chromatin structures which may impede access by the basal transcription machinery. In association with hdac3, may play a role in the regulation of the circadian clock. The polypeptide is Nuclear receptor corepressor 1 (ncor1) (Xenopus tropicalis (Western clawed frog)).